The following is a 144-amino-acid chain: Heme transporter hrg1-B (144 aa).

A run of 4 helical transmembrane segments spans residues 6–26 (IYIS…AFIV), 38–58 (AMGG…IMYI), 71–91 (FFMF…ATFI), and 107–127 (FYLS…LGLY). Residues 140 to 141 (IL) carry the Di-leucine motif motif.

Belongs to the HRG family.

It localises to the endosome membrane. Its subcellular location is the lysosome membrane. The protein localises to the cytoplasmic vesicle. It is found in the phagosome membrane. The catalysed reaction is heme b(in) = heme b(out). Heme transporter that regulates intracellular heme availability through the endosomal or lysosomal compartment. In macrophages, is the heme transporter for heme-iron recycling. Essential for macrophage iron homeostasis, transports heme from the phagolysosome to the cytoplasm during erythrophagocytosis (EP). The protein is Heme transporter hrg1-B (slc48a1a) of Danio rerio (Zebrafish).